The sequence spans 530 residues: Chaperonin GroEL, chloroplastic (530 aa).

ATP contacts are provided by residues 29–32, 86–90, Gly-414, 480–482, and Asp-496; these read TLGP, DGTTT, and DAL.

This sequence belongs to the chaperonin (HSP60) family. As to quaternary structure, forms a cylinder of 14 subunits composed of two heptameric rings stacked back-to-back. Interacts with the co-chaperonin GroES.

Its subcellular location is the plastid. It localises to the chloroplast. The enzyme catalyses ATP + H2O + a folded polypeptide = ADP + phosphate + an unfolded polypeptide.. Its function is as follows. Together with its co-chaperonin GroES, plays an essential role in assisting protein folding. The GroEL-GroES system forms a nano-cage that allows encapsulation of the non-native substrate proteins and provides a physical environment optimized to promote and accelerate protein folding. The polypeptide is Chaperonin GroEL, chloroplastic (Cyanidium caldarium (Red alga)).